We begin with the raw amino-acid sequence, 305 residues long: Ornithine carbamoyltransferase (305 aa).

Carbamoyl phosphate-binding positions include 54–57, Gln-81, Arg-105, and 132–135; these read STRT and HPCQ. L-ornithine-binding positions include Asn-163, Asp-220, and 224-225; that span reads SM. Residues 260–261 and Arg-288 each bind carbamoyl phosphate; that span reads CL.

It belongs to the aspartate/ornithine carbamoyltransferase superfamily. OTCase family.

It localises to the cytoplasm. It catalyses the reaction carbamoyl phosphate + L-ornithine = L-citrulline + phosphate + H(+). It functions in the pathway amino-acid biosynthesis; L-arginine biosynthesis; L-arginine from L-ornithine and carbamoyl phosphate: step 1/3. Its function is as follows. Reversibly catalyzes the transfer of the carbamoyl group from carbamoyl phosphate (CP) to the N(epsilon) atom of ornithine (ORN) to produce L-citrulline. The chain is Ornithine carbamoyltransferase from Chromohalobacter salexigens (strain ATCC BAA-138 / DSM 3043 / CIP 106854 / NCIMB 13768 / 1H11).